We begin with the raw amino-acid sequence, 137 residues long: Nucleoside diphosphate kinase (137 aa).

Residues Lys9, Phe57, Arg85, Thr91, Arg102, and Asn112 each contribute to the ATP site. His115 acts as the Pros-phosphohistidine intermediate in catalysis.

This sequence belongs to the NDK family. Homotetramer. The cofactor is Mg(2+).

It is found in the cytoplasm. It carries out the reaction a 2'-deoxyribonucleoside 5'-diphosphate + ATP = a 2'-deoxyribonucleoside 5'-triphosphate + ADP. It catalyses the reaction a ribonucleoside 5'-diphosphate + ATP = a ribonucleoside 5'-triphosphate + ADP. Functionally, major role in the synthesis of nucleoside triphosphates other than ATP. The ATP gamma phosphate is transferred to the NDP beta phosphate via a ping-pong mechanism, using a phosphorylated active-site intermediate. This is Nucleoside diphosphate kinase from Syntrophotalea carbinolica (strain DSM 2380 / NBRC 103641 / GraBd1) (Pelobacter carbinolicus).